Reading from the N-terminus, the 182-residue chain is Protein canopy homolog 2 (182 aa).

Positions 1–20 (MKGWGWLALLLGVLLGTAWA) are cleaved as a signal peptide. One can recognise a Saposin B-type domain in the interval 24–175 (QDLHCGACRA…KRTDLCDHAL (152 aa)). 3 disulfide bridges follow: cysteine 28–cysteine 171, cysteine 31–cysteine 164, and cysteine 86–cysteine 137. Serine 115 carries the post-translational modification Phosphoserine. The short motif at 179–182 (HDEL) is the Prevents secretion from ER element.

The protein belongs to the canopy family. As to quaternary structure, interacts with MYLIP/MIR.

The protein localises to the endoplasmic reticulum. Functionally, positive regulator of neurite outgrowth by stabilizing myosin regulatory light chain (MRLC). It prevents MIR-mediated MRLC ubiquitination and its subsequent proteasomal degradation. The chain is Protein canopy homolog 2 (Cnpy2) from Mus musculus (Mouse).